The sequence spans 308 residues: tRNA dimethylallyltransferase (308 aa).

10 to 17 (GPTASGKT) is a binding site for ATP. A substrate-binding site is contributed by 12-17 (TASGKT). Interaction with substrate tRNA stretches follow at residues 35-38 (DSSL) and 159-163 (QRIFR).

It belongs to the IPP transferase family. Monomer. It depends on Mg(2+) as a cofactor.

It catalyses the reaction adenosine(37) in tRNA + dimethylallyl diphosphate = N(6)-dimethylallyladenosine(37) in tRNA + diphosphate. Its function is as follows. Catalyzes the transfer of a dimethylallyl group onto the adenine at position 37 in tRNAs that read codons beginning with uridine, leading to the formation of N6-(dimethylallyl)adenosine (i(6)A). The chain is tRNA dimethylallyltransferase from Francisella tularensis subsp. tularensis (strain FSC 198).